The sequence spans 120 residues: Seripauperin-10 (120 aa).

Positions Met-1–Ala-20 are cleaved as a signal peptide.

This sequence belongs to the SRP1/TIP1 family. Seripauperin subfamily.

The sequence is that of Seripauperin-10 (PAU10) from Saccharomyces cerevisiae (strain ATCC 204508 / S288c) (Baker's yeast).